Reading from the N-terminus, the 987-residue chain is AP3-complex subunit beta-A (987 aa).

The tract at residues 586–662 (QDQLSDLDKQ…ISETSVSADQ (77 aa)) is disordered. Over residues 603-613 (DGSEESSETGD) the composition is skewed to acidic residues. Over residues 614–631 (ENGSSDYDSESSNGSDFS) the composition is skewed to low complexity.

Belongs to the adaptor complexes large subunit family. As to quaternary structure, adaptor protein complex 3 (AP-3) is a heterotetramer composed of two large adaptins (delta-type subunit and beta-type subunit), a medium adaptin (mu-type subunit) and a small adaptin (sigma-type subunit).

It localises to the cytoplasm. It is found in the golgi apparatus. The protein localises to the cytoplasmic vesicle membrane. Part of the AP-3 complex, an adaptor-related complex which seems to be clathrin-associated. The complex is associated with the Golgi region as well as more peripheral structures. It facilitates the budding of vesicles from the Golgi membrane and may be directly involved in trafficking to the vacuole. It also function in maintaining the identity of lytic vacuoles and in regulating the transition between storage and lytic vacuoles. The protein is AP3-complex subunit beta-A (AP3BA) of Arabidopsis thaliana (Mouse-ear cress).